The primary structure comprises 430 residues: Replication protein A 32 kDa subunit C (430 aa).

The segment at 14 to 46 (MPSQRSGAPAPEYSAAGTGAAAAPSPSKPRDPR) is disordered. The segment covering 23–38 (APEYSAAGTGAAAAPS) has biased composition (low complexity). Residues 86–160 (VRVLGRVVSV…QGLARSIRPI (75 aa)) constitute a DNA-binding region (OB).

It belongs to the replication factor A protein 2 family. In terms of assembly, heterotrimer of RPA1, RPA2 and RPA3 (canonical replication protein A complex). Interacts with RPA1C and RPA3. Post-translationally, phosphorylated in a cell-cycle-dependent manner (from the S phase until mitosis). In response to DNA damage, recruited to DNA-repair nuclear foci, as a hypophosphorylated form.

It localises to the nucleus. Its function is as follows. Component of the replication protein A complex (RPA) required for DNA recombination, repair and replication. The activity of RPA is mediated by single-stranded DNA binding and protein interactions. The polypeptide is Replication protein A 32 kDa subunit C (RPA2C) (Oryza sativa subsp. japonica (Rice)).